The primary structure comprises 415 residues: Alpha-1,3/1,6-mannosyltransferase ALG2 (415 aa).

The Cytoplasmic portion of the chain corresponds to 1-84 (MAENLYRARS…LPRSLGWGGR (84 aa)). An intramembrane region (helical) is located at residues 85-105 (GAAICSYVRMVFLALYVLFLS). At 106–415 (GEEFDVVVCD…QLYQYVTKLV (310 aa)) the chain is on the cytoplasmic side.

The protein belongs to the glycosyltransferase group 1 family. Glycosyltransferase 4 subfamily.

The protein localises to the endoplasmic reticulum membrane. The enzyme catalyses a beta-D-Man-(1-&gt;4)-beta-D-GlcNAc-(1-&gt;4)-alpha-D-GlcNAc-diphospho-di-trans,poly-cis-dolichol + GDP-alpha-D-mannose = an alpha-D-Man-(1-&gt;3)-beta-D-Man-(1-&gt;4)-beta-D-GlcNAc-(1-&gt;4)-alpha-D-GlcNAc-diphospho-di-trans,poly-cis-dolichol + GDP + H(+). The catalysed reaction is an alpha-D-Man-(1-&gt;3)-beta-D-Man-(1-&gt;4)-beta-D-GlcNAc-(1-&gt;4)-alpha-D-GlcNAc-diphospho-di-trans,poly-cis-dolichol + GDP-alpha-D-mannose = an alpha-D-Man-(1-&gt;3)-[alpha-D-Man-(1-&gt;6)]-beta-D-Man-(1-&gt;4)-beta-D-GlcNAc-(1-&gt;4)-alpha-D-GlcNAc-diphospho-di-trans,poly-cis-dolichol + GDP + H(+). It catalyses the reaction a beta-D-Man-(1-&gt;4)-beta-D-GlcNAc-(1-&gt;4)-alpha-D-GlcNAc-diphospho-di-trans,poly-cis-dolichol + GDP-alpha-D-mannose = an alpha-D-Man-(1-&gt;6)-beta-D-Man-(1-&gt;4)-beta-D-GlcNAc-(1-&gt;4)-alpha-D-GlcNAc-diphospho-di-trans,poly-cis-dolichol + GDP + H(+). It carries out the reaction an alpha-D-Man-(1-&gt;6)-beta-D-Man-(1-&gt;4)-beta-D-GlcNAc-(1-&gt;4)-alpha-D-GlcNAc-diphospho-di-trans,poly-cis-dolichol + GDP-alpha-D-mannose = an alpha-D-Man-(1-&gt;3)-[alpha-D-Man-(1-&gt;6)]-beta-D-Man-(1-&gt;4)-beta-D-GlcNAc-(1-&gt;4)-alpha-D-GlcNAc-diphospho-di-trans,poly-cis-dolichol + GDP + H(+). The protein operates within protein modification; protein glycosylation. Mannosyltransferase that operates in the biosynthetic pathway of dolichol-linked oligosaccharides, the glycan precursors employed in protein asparagine (N)-glycosylation. The assembly of dolichol-linked oligosaccharides begins on the cytosolic side of the endoplasmic reticulum membrane and finishes in its lumen. The sequential addition of sugars to dolichol pyrophosphate produces dolichol-linked oligosaccharides containing fourteen sugars, including two GlcNAcs, nine mannoses and three glucoses. Once assembled, the oligosaccharide is transferred from the lipid to nascent proteins by oligosaccharyltransferases. Catalyzes, on the cytoplasmic face of the endoplasmic reticulum, the addition of the second and third mannose residues to the dolichol-linked oligosaccharide chain, to produce Man3GlcNAc(2)-PP-dolichol core oligosaccharide. Man3GlcNAc(2)-PP-dolichol is a substrate for ALG11, the following enzyme in the biosynthetic pathway. While both alpha 1,3 and alpha 1,6 linkages are possible, the sequential addition of alpha 1,3 followed by alpha 1,6 is probably the preferred route. The polypeptide is Alpha-1,3/1,6-mannosyltransferase ALG2 (Alg2) (Mus musculus (Mouse)).